Consider the following 309-residue polypeptide: Cysteinyl leukotriene receptor 2 (309 aa).

At 1 to 26 (MEVTGTPSSYSNRNCTIENFKKEFYP) the chain is on the extracellular side. Asparagine 14 is a glycosylation site (N-linked (GlcNAc...) asparagine). The helical transmembrane segment at 27–47 (IIYLIIFFWGALGNGFSIYVF) threads the bilayer. Residues 48-56 (LQTCKKSTS) lie on the Cytoplasmic side of the membrane. Residues 57–77 (VNVFMLNLATSDFLFISTLPF) traverse the membrane as a helical segment. Over 78-98 (RADYYFRGSNWIFGDLACRVM) the chain is Extracellular. Cysteine 95 and cysteine 171 are oxidised to a cystine. The chain crosses the membrane as a helical span at residues 99–119 (SYSLYVNMYTSIYFLTVLSVV). The Cytoplasmic segment spans residues 120-138 (RFLATVHPFRMFHVTSVRS). The chain crosses the membrane as a helical span at residues 139–159 (AWILCGIIWVFIMASSALLLV). Residues 160-187 (NGQEEKDNIISCLELSPQKFKSLLIMNH) lie on the Extracellular side of the membrane. The helical transmembrane segment at 188–208 (IAVAVGFLLPFLTLTVCYLLI) threads the bilayer. Residues 209 to 229 (IRILLKAEIPESGPRAAHRKA) lie on the Cytoplasmic side of the membrane. A helical membrane pass occupies residues 230–250 (LTTIVIAMITFLLCFLPYHAL). At 251 to 271 (RTLHLVTWDKDSCGDVLHKAT) the chain is on the extracellular side. A helical membrane pass occupies residues 272–292 (VITLTMAAANSCFNPFLYYFA). Residues 293 to 309 (GENFKARLRAIFSKVHL) are Cytoplasmic-facing.

The protein belongs to the G-protein coupled receptor 1 family. As to expression, widely expressed at low levels, with highest expression in the spleen, thymus and adrenal gland, and lower in the kidney, brain and peripheral blood leukocytes.

It localises to the cell membrane. In terms of biological role, receptor for cysteinyl leukotrienes. The response is mediated via a G-protein that activates a phosphatidylinositol-calcium second messenger system. The rank order of affinities for the leukotrienes is LTC4 = LTD4 &gt;&gt; LTE4. The protein is Cysteinyl leukotriene receptor 2 (Cysltr2) of Mus musculus (Mouse).